The primary structure comprises 604 residues: Structure-specific endonuclease subunit MUS81 (604 aa).

Disordered regions lie at residues 93–138 (AAVH…REYV), 227–248 (KLDSEETGTRHEDVDSQDGQNV), and 253–272 (LEEEDEDEEKESWSSERPAV). 2 stretches are compositionally biased toward basic and acidic residues: residues 116–128 (EHTKLTQKEVRKE) and 227–240 (KLDSEETGTRHEDV). The segment at 138-254 (VPQKRSGGYA…GQNVVDLTLE (117 aa)) is winged helix domain (WHD); critical for endonuclease activity. Over residues 253–262 (LEEEDEDEEK) the composition is skewed to acidic residues. An ERCC4 domain is found at 314–423 (VLCVDLCETT…KPIYLVEECG (110 aa)). Active-site residues include Asp318, Glu321, and Asp353. Residues Asp318, Glu321, Asp353, Glu384, and Arg385 each coordinate Mg(2+). The interval 524–598 (VREVFARQLM…LSRTIYQLYC (75 aa)) is helix-hairpin-helix (2HhH); involved in DNA recognition and bending.

Belongs to the XPF family. In terms of assembly, part of the heterodimeric DNA structure-specific endonuclease complex MUS81-EME1. Part of the heterodimeric DNA structure-specific endonuclease complex MUS81-EME2. It depends on Mg(2+) as a cofactor.

The protein localises to the nucleus. Its subcellular location is the nucleolus. Functionally, catalytic subunit of two functionally distinct, structure-specific, heterodimeric DNA endonucleases MUS81-EME1 and MUS81-EME2 that are involved in the maintenance of genome stability. Both endonucleases have essentially the same substrate specificity though MUS81-EME2 is more active than its MUS81-EME1 counterpart. Both cleave 3'-flaps and nicked Holliday junctions, and exhibit limited endonuclease activity with 5' flaps and nicked double-stranded DNAs. MUS81-EME2 which is active during the replication of DNA is more specifically involved in replication fork processing. Replication forks frequently encounter obstacles to their passage, including DNA base lesions, DNA interstrand cross-links, difficult-to-replicate sequences, transcription bubbles, or tightly bound proteins. One mechanism for the restart of a stalled replication fork involves nucleolytic cleavage mediated by the MUS81-EME2 endonuclease. By acting upon the stalled fork, MUS81-EME2 generates a DNA double-strand break (DSB) that can be repaired by homologous recombination, leading to the restoration of an active fork. MUS81-EME2 could also function in telomere maintenance. MUS81-EME1, on the other hand, is active later in the cell cycle and functions in the resolution of mitotic recombination intermediates including the Holliday junctions, the four-way DNA intermediates that form during homologous recombination. This is Structure-specific endonuclease subunit MUS81 (mus81) from Danio rerio (Zebrafish).